The chain runs to 455 residues: Chromosomal replication initiator protein DnaA (455 aa).

A domain I, interacts with DnaA modulators region spans residues 1–82 (MNRNTSSLWA…NPDFVVKLVE (82 aa)). The tract at residues 82-117 (EGVKPAPKQNNIVTTKQNAETAVDSEQHLQSVEFKT) is domain II. The tract at residues 118 to 335 (GLNSNHLFEN…GALNRVIANA (218 aa)) is domain III, AAA+ region. ATP-binding residues include Gly163, Gly165, Lys166, and Thr167. The domain IV, binds dsDNA stretch occupies residues 336–455 (EFTGKTITID…WSNLIRTLSA (120 aa)).

This sequence belongs to the DnaA family. As to quaternary structure, oligomerizes as a right-handed, spiral filament on DNA at oriC.

The protein localises to the cytoplasm. Plays an essential role in the initiation and regulation of chromosomal replication. ATP-DnaA binds to the origin of replication (oriC) to initiate formation of the DNA replication initiation complex once per cell cycle. Binds the DnaA box (a 9 base pair repeat at the origin) and separates the double-stranded (ds)DNA. Forms a right-handed helical filament on oriC DNA; dsDNA binds to the exterior of the filament while single-stranded (ss)DNA is stabiized in the filament's interior. The ATP-DnaA-oriC complex binds and stabilizes one strand of the AT-rich DNA unwinding element (DUE), permitting loading of DNA polymerase. After initiation quickly degrades to an ADP-DnaA complex that is not apt for DNA replication. Binds acidic phospholipids. This is Chromosomal replication initiator protein DnaA from Actinobacillus succinogenes (strain ATCC 55618 / DSM 22257 / CCUG 43843 / 130Z).